Here is a 242-residue protein sequence, read N- to C-terminus: Phosphoribosylaminoimidazole-succinocarboxamide synthase (242 aa).

Belongs to the SAICAR synthetase family.

The catalysed reaction is 5-amino-1-(5-phospho-D-ribosyl)imidazole-4-carboxylate + L-aspartate + ATP = (2S)-2-[5-amino-1-(5-phospho-beta-D-ribosyl)imidazole-4-carboxamido]succinate + ADP + phosphate + 2 H(+). It participates in purine metabolism; IMP biosynthesis via de novo pathway; 5-amino-1-(5-phospho-D-ribosyl)imidazole-4-carboxamide from 5-amino-1-(5-phospho-D-ribosyl)imidazole-4-carboxylate: step 1/2. This is Phosphoribosylaminoimidazole-succinocarboxamide synthase from Cyanothece sp. (strain PCC 7425 / ATCC 29141).